We begin with the raw amino-acid sequence, 376 residues long: Protein RecA (376 aa).

66–73 (GPESSGKT) contacts ATP. The disordered stretch occupies residues 329 to 376 (VGVKPEDLTAEPGADAAGAAADAEAPAKSVPAPAAKSAKGSKAAAAKS). The segment covering 338-376 (AEPGADAAGAAADAEAPAKSVPAPAAKSAKGSKAAAAKS) has biased composition (low complexity).

The protein belongs to the RecA family.

Its subcellular location is the cytoplasm. In terms of biological role, can catalyze the hydrolysis of ATP in the presence of single-stranded DNA, the ATP-dependent uptake of single-stranded DNA by duplex DNA, and the ATP-dependent hybridization of homologous single-stranded DNAs. It interacts with LexA causing its activation and leading to its autocatalytic cleavage. This Streptomyces rimosus protein is Protein RecA.